Reading from the N-terminus, the 255-residue chain is Electron transfer flavoprotein beta subunit lysine methyltransferase (255 aa).

A mitochondrion-targeting transit peptide spans 1–32 (MAFSLCWKAPRSQWSFLQALNSGFPLFPWRTV).

This sequence belongs to the methyltransferase superfamily. ETFBKMT family. Interacts with HSPD1; this protein may possibly be a methylation substrate.

Its subcellular location is the cytoplasm. The protein resides in the mitochondrion matrix. It catalyses the reaction L-lysyl-[protein] + 3 S-adenosyl-L-methionine = N(6),N(6),N(6)-trimethyl-L-lysyl-[protein] + 3 S-adenosyl-L-homocysteine + 3 H(+). In terms of biological role, protein-lysine methyltransferase that selectively trimethylates the flavoprotein ETFB in mitochondria. Thereby, may negatively regulate the function of ETFB in electron transfer from Acyl-CoA dehydrogenases to the main respiratory chain. The polypeptide is Electron transfer flavoprotein beta subunit lysine methyltransferase (Rattus norvegicus (Rat)).